A 687-amino-acid polypeptide reads, in one-letter code: Sphingoid long chain base kinase 5 (687 aa).

The interval 1-20 is disordered; it reads MTLKPSKRRKGRSRHSRKKQ. S-palmitoyl cysteine; by AKR1 attachment occurs at residues Cys-91 and Cys-94. The span at 101–116 shows a compositional bias: basic and acidic residues; it reads IDRSETSTTDTSKDDL. Disordered stretches follow at residues 101–130 and 180–207; these read IDRSETSTTDTSKDDLSANPKLHYPSVNGQ and DELESSQKKERKGNSLSRGSNSSSSLLT. A compositionally biased stretch (low complexity) spans 193-207; it reads NSLSRGSNSSSSLLT. Residues 266–405 form the DAGKc domain; it reads RRNKSIFVII…IDLMCCSQPS (140 aa). ATP contacts are provided by residues 276 to 278 and Thr-308; that span reads NPF. Residue 333–336 coordinates substrate; that stretch reads SGDG. Asp-335 (proton donor/acceptor) is an active-site residue. Residues Glu-340, 366–368, Arg-434, and Arg-440 each bind ATP; that span reads GSG. A compositionally biased stretch (acidic residues) spans 506-524; that stretch reads EYETENEDEDEDADADDED. Residues 506–525 form a disordered region; sequence EYETENEDEDEDADADDEDS. 652 to 654 is an ATP binding site; that stretch reads DGE.

The protein resides in the golgi apparatus membrane. The enzyme catalyses (4R)-hydroxysphinganine + ATP = (4R)-hydroxysphinganine 1-phosphate + ADP + H(+). The catalysed reaction is a sphingoid base + ATP = a sphingoid 1-phosphate + ADP + H(+). It catalyses the reaction sphinganine + ATP = sphinganine 1-phosphate + ADP + H(+). In terms of biological role, catalyzes the phosphorylation of the sphingoid long chain bases dihydrosphingosine (DHS or sphinganine) and phytosphingosine (PHS) to form dihydrosphingosine 1-phosphate (DHS-1P) and phytosphingosine 1-phosphate (PHS-1P) respectively. Redundant to LCB4, is only responsible for few percent of the total activity. Involved in the biosynthesis of sphingolipids and ceramides. Involved in heat-induced transient cell cycle arrest. Accumulation of phosphorylated sphingoid long chain bases (LCBPs) stimulates calcium influx and activates calcineurin signaling. Involved in heat-stress resistance. The chain is Sphingoid long chain base kinase 5 (LCB5) from Saccharomyces cerevisiae (strain ATCC 204508 / S288c) (Baker's yeast).